The primary structure comprises 430 residues: Enolase (430 aa).

Gln-164 contributes to the (2R)-2-phosphoglycerate binding site. Glu-208 acts as the Proton donor in catalysis. Residues Asp-245, Glu-288, and Asp-315 each coordinate Mg(2+). Residues Lys-340, Arg-369, Ser-370, and Lys-391 each contribute to the (2R)-2-phosphoglycerate site. The active-site Proton acceptor is the Lys-340.

This sequence belongs to the enolase family. Mg(2+) serves as cofactor.

The protein localises to the cytoplasm. It localises to the secreted. The protein resides in the cell surface. The catalysed reaction is (2R)-2-phosphoglycerate = phosphoenolpyruvate + H2O. It participates in carbohydrate degradation; glycolysis; pyruvate from D-glyceraldehyde 3-phosphate: step 4/5. Catalyzes the reversible conversion of 2-phosphoglycerate (2-PG) into phosphoenolpyruvate (PEP). It is essential for the degradation of carbohydrates via glycolysis. The polypeptide is Enolase (Thermococcus kodakarensis (strain ATCC BAA-918 / JCM 12380 / KOD1) (Pyrococcus kodakaraensis (strain KOD1))).